A 215-amino-acid polypeptide reads, in one-letter code: Probable phosphoglycerate mutase GpmB (215 aa).

Residues Arg8–Asn15, Gln21–Gly22, Arg58, Arg60, Glu82–Met85, Arg104–Arg105, and Gly151–Ile152 contribute to the substrate site. The active-site Tele-phosphohistidine intermediate is His9. Glu82 serves as the catalytic Proton donor/acceptor.

Belongs to the phosphoglycerate mutase family. GpmB subfamily.

It catalyses the reaction (2R)-2-phosphoglycerate = (2R)-3-phosphoglycerate. Its pathway is carbohydrate degradation; glycolysis; pyruvate from D-glyceraldehyde 3-phosphate: step 3/5. The chain is Probable phosphoglycerate mutase GpmB from Klebsiella pneumoniae subsp. pneumoniae (strain ATCC 700721 / MGH 78578).